The primary structure comprises 360 residues: Photosystem II protein D1 1 (360 aa).

The next 3 membrane-spanning stretches (helical) occupy residues 29 to 46 (YIGW…TATT), 118 to 133 (HFLI…QWEL), and 142 to 156 (WICV…AATA). Residue His118 participates in chlorophyll a binding. Residue Tyr126 participates in pheophytin a binding. Asp170 and Glu189 together coordinate [CaMn4O5] cluster. A helical transmembrane segment spans residues 197-218 (FHMLGVAGVFGGALFAAMHGSL). His198 is a chlorophyll a binding site. Residues His215 and 264-265 (SF) each bind a quinone. His215 lines the Fe cation pocket. A Fe cation-binding site is contributed by His272. The chain crosses the membrane as a helical span at residues 274 to 288 (FLGAWPVVGIWFAAL). 4 residues coordinate [CaMn4O5] cluster: His332, Glu333, Asp342, and Ala344. Residues 345–360 (SGDAQMVALNAPAIEG) constitute a propeptide that is removed on maturation.

It belongs to the reaction center PufL/M/PsbA/D family. PSII is composed of 1 copy each of membrane proteins PsbA, PsbB, PsbC, PsbD, PsbE, PsbF, PsbH, PsbI, PsbJ, PsbK, PsbL, PsbM, PsbT, PsbX, PsbY, PsbZ, Psb30/Ycf12, peripheral proteins PsbO, CyanoQ (PsbQ), PsbU, PsbV and a large number of cofactors. It forms dimeric complexes. Requires The D1/D2 heterodimer binds P680, chlorophylls that are the primary electron donor of PSII, and subsequent electron acceptors. It shares a non-heme iron and each subunit binds pheophytin, quinone, additional chlorophylls, carotenoids and lipids. D1 provides most of the ligands for the Mn4-Ca-O5 cluster of the oxygen-evolving complex (OEC). There is also a Cl(-1) ion associated with D1 and D2, which is required for oxygen evolution. The PSII complex binds additional chlorophylls, carotenoids and specific lipids. as cofactor. Post-translationally, C-terminally processed by CtpA; processing is essential to allow assembly of the oxygen-evolving complex and photosynthetic growth. Tyr-161 forms a radical intermediate that is referred to as redox-active TyrZ, YZ or Y-Z. In terms of processing, C-terminally processed by CtpA; processing is essential to allow assembly of the oxygen-evolving complex and thus photosynthetic growth.

Its subcellular location is the cellular thylakoid membrane. The enzyme catalyses 2 a plastoquinone + 4 hnu + 2 H2O = 2 a plastoquinol + O2. Functionally, photosystem II (PSII) is a light-driven water:plastoquinone oxidoreductase that uses light energy to abstract electrons from H(2)O, generating O(2) and a proton gradient subsequently used for ATP formation. It consists of a core antenna complex that captures photons, and an electron transfer chain that converts photonic excitation into a charge separation. The D1/D2 (PsbA/PsbD) reaction center heterodimer binds P680, the primary electron donor of PSII as well as several subsequent electron acceptors. This is Photosystem II protein D1 1 from Synechocystis sp. (strain ATCC 27184 / PCC 6803 / Kazusa).